The chain runs to 305 residues: Acyl transferase (305 aa).

Active-site charge relay system residues include serine 116, aspartate 213, and histidine 243.

This sequence belongs to the LuxD family.

The protein operates within lipid metabolism; fatty acid reduction for biolumincescence. Acyl transferase is part of the fatty acid reductase system required for aldehyde biosynthesis; it produces fatty acids for the luminescent reaction. The polypeptide is Acyl transferase (Photobacterium leiognathi).